Here is a 118-residue protein sequence, read N- to C-terminus: MAGVWVFEDGMVRRADSEAPSRGRGVGGGGGGGKVLVHVPSSEVVTSYEVLERRLRELGWERYLNDPCLLQFHQRSTVHLISVPRDFSRLKLVHMYDVVVKTRNVFEVRDAATTASPP.

This sequence belongs to the FPF1 family.

The polypeptide is Flowering-promoting factor 1-like protein 4 (Oryza sativa subsp. japonica (Rice)).